A 301-amino-acid polypeptide reads, in one-letter code: Protoheme IX farnesyltransferase 1 (301 aa).

The next 9 helical transmembrane spans lie at 29 to 49 (VVAL…PHAV), 51 to 71 (VQPL…AAAL), 101 to 121 (ALIF…SLVN), 123 to 143 (LTAW…TAYL), 150 to 170 (NIVI…TAVT), 177 to 197 (ALLL…ALAI), 223 to 243 (CILL…LVGM), 244 to 264 (CGPV…YKAW), and 275 to 295 (AMQV…ALLL).

This sequence belongs to the UbiA prenyltransferase family. Protoheme IX farnesyltransferase subfamily.

The protein localises to the cell inner membrane. The enzyme catalyses heme b + (2E,6E)-farnesyl diphosphate + H2O = Fe(II)-heme o + diphosphate. The protein operates within porphyrin-containing compound metabolism; heme O biosynthesis; heme O from protoheme: step 1/1. Functionally, converts heme B (protoheme IX) to heme O by substitution of the vinyl group on carbon 2 of heme B porphyrin ring with a hydroxyethyl farnesyl side group. This is Protoheme IX farnesyltransferase 1 from Shewanella baltica (strain OS185).